A 338-amino-acid polypeptide reads, in one-letter code: Glycerol-3-phosphate dehydrogenase [NAD(P)+] (338 aa).

NADPH contacts are provided by Ser13, Trp14, and Lys108. The sn-glycerol 3-phosphate site is built by Lys108, Gly139, and Ser141. Residue Ala143 participates in NADPH binding. Positions 194, 247, 257, 258, and 259 each coordinate sn-glycerol 3-phosphate. The active-site Proton acceptor is the Lys194. An NADPH-binding site is contributed by Arg258. The NADPH site is built by Val282 and Glu284.

It belongs to the NAD-dependent glycerol-3-phosphate dehydrogenase family.

Its subcellular location is the cytoplasm. The enzyme catalyses sn-glycerol 3-phosphate + NAD(+) = dihydroxyacetone phosphate + NADH + H(+). It carries out the reaction sn-glycerol 3-phosphate + NADP(+) = dihydroxyacetone phosphate + NADPH + H(+). It participates in membrane lipid metabolism; glycerophospholipid metabolism. Its function is as follows. Catalyzes the reduction of the glycolytic intermediate dihydroxyacetone phosphate (DHAP) to sn-glycerol 3-phosphate (G3P), the key precursor for phospholipid synthesis. This is Glycerol-3-phosphate dehydrogenase [NAD(P)+] from Streptococcus pyogenes serotype M2 (strain MGAS10270).